The chain runs to 201 residues: Pyridoxal 5'-phosphate synthase subunit PdxT (201 aa).

48–50 (GES) contributes to the L-glutamine binding site. C80 (nucleophile) is an active-site residue. L-glutamine-binding positions include R109 and 137-138 (IR). Catalysis depends on charge relay system residues H180 and E182.

It belongs to the glutaminase PdxT/SNO family. In the presence of PdxS, forms a dodecamer of heterodimers. Only shows activity in the heterodimer.

The catalysed reaction is aldehydo-D-ribose 5-phosphate + D-glyceraldehyde 3-phosphate + L-glutamine = pyridoxal 5'-phosphate + L-glutamate + phosphate + 3 H2O + H(+). It carries out the reaction L-glutamine + H2O = L-glutamate + NH4(+). The protein operates within cofactor biosynthesis; pyridoxal 5'-phosphate biosynthesis. Catalyzes the hydrolysis of glutamine to glutamate and ammonia as part of the biosynthesis of pyridoxal 5'-phosphate. The resulting ammonia molecule is channeled to the active site of PdxS. The sequence is that of Pyridoxal 5'-phosphate synthase subunit PdxT from Cutibacterium acnes (strain DSM 16379 / KPA171202) (Propionibacterium acnes).